A 421-amino-acid polypeptide reads, in one-letter code: Histidine--tRNA ligase (421 aa).

It belongs to the class-II aminoacyl-tRNA synthetase family. In terms of assembly, homodimer.

The protein resides in the cytoplasm. The catalysed reaction is tRNA(His) + L-histidine + ATP = L-histidyl-tRNA(His) + AMP + diphosphate + H(+). The protein is Histidine--tRNA ligase of Francisella tularensis subsp. novicida (strain U112).